The following is a 513-amino-acid chain: Calcium-dependent protein kinase 2 (513 aa).

The 259-residue stretch at 65–323 folds into the Protein kinase domain; it reads YSFGKELGRG…SAQVLQHQWL (259 aa). ATP contacts are provided by residues 71–79 and Lys94; that span reads LGRGQFGVT. Residue Asp189 is the Proton acceptor of the active site. An autoinhibitory domain region spans residues 329 to 359; it reads ASDKPIDSAVLSRMKQFRAMNKLKKMALKVI. EF-hand domains are found at residues 366-401, 402-437, 438-473, and 478-508; these read EEIK…LGSK, LSEA…RHKL, ERDE…HEMG, and IREI…GMQQ. Ca(2+) contacts are provided by Asp379, Asp381, Ser383, Thr385, Glu390, Asp415, Asp417, Asn419, Ser421, Glu426, Asp451, Asp453, Ser455, Glu462, Asp486, Asp488, Asp490, Arg492, and Glu497.

This sequence belongs to the protein kinase superfamily. Ser/Thr protein kinase family. CDPK subfamily.

It catalyses the reaction L-seryl-[protein] + ATP = O-phospho-L-seryl-[protein] + ADP + H(+). It carries out the reaction L-threonyl-[protein] + ATP = O-phospho-L-threonyl-[protein] + ADP + H(+). Activated by calcium. Autophosphorylation may play an important role in the regulation of the kinase activity. May play a role in signal transduction pathways that involve calcium as a second messenger. This chain is Calcium-dependent protein kinase 2 (CPK2), found in Zea mays (Maize).